Here is a 282-residue protein sequence, read N- to C-terminus: PTS system sorbose-specific EIID component (282 aa).

The PTS EIID domain maps to Thr13 to Leu281. Transmembrane regions (helical) follow at residues Leu135–Phe155, Gly197–Val217, Ile234–Leu254, and Pro261–Leu281.

It is found in the cell membrane. In terms of biological role, the phosphoenolpyruvate-dependent sugar phosphotransferase system (PTS), a major carbohydrate active transport system, catalyzes the phosphorylation of incoming sugar substrates concomitant with their translocation across the cell membrane. The enzyme II SorABCD PTS system is involved in L-sorbose transport. In Lacticaseibacillus casei (Lactobacillus casei), this protein is PTS system sorbose-specific EIID component.